The following is a 178-amino-acid chain: ATP synthase subunit delta (178 aa).

It belongs to the ATPase delta chain family. F-type ATPases have 2 components, F(1) - the catalytic core - and F(0) - the membrane proton channel. F(1) has five subunits: alpha(3), beta(3), gamma(1), delta(1), epsilon(1). F(0) has three main subunits: a(1), b(2) and c(10-14). The alpha and beta chains form an alternating ring which encloses part of the gamma chain. F(1) is attached to F(0) by a central stalk formed by the gamma and epsilon chains, while a peripheral stalk is formed by the delta and b chains.

The protein resides in the cell inner membrane. In terms of biological role, f(1)F(0) ATP synthase produces ATP from ADP in the presence of a proton or sodium gradient. F-type ATPases consist of two structural domains, F(1) containing the extramembraneous catalytic core and F(0) containing the membrane proton channel, linked together by a central stalk and a peripheral stalk. During catalysis, ATP synthesis in the catalytic domain of F(1) is coupled via a rotary mechanism of the central stalk subunits to proton translocation. Its function is as follows. This protein is part of the stalk that links CF(0) to CF(1). It either transmits conformational changes from CF(0) to CF(1) or is implicated in proton conduction. This is ATP synthase subunit delta from Pseudomonas syringae pv. syringae (strain B728a).